A 560-amino-acid polypeptide reads, in one-letter code: Aluminum-activated malate transporter 12 (560 aa).

6 helical membrane passes run 54–74 (VGLSLTLVSLLYLMEPLFKGI), 78–98 (AIWAVMTVVVVLEFSAGATLC), 104–124 (GLGTLIAGSLAFFIEFVANDS), 130–150 (AIFIGTAVFIIGAAATYIRFI), 156–176 (NYDYGVVIFLLTFNLITVSSY), and 189–209 (FYTIAVGCGICLFMSLLVFPI). The tract at residues 386 to 421 (LHRHNNKHQNGSISNNKHHQRNSSNSGKDLNGDVSL) is disordered. The segment covering 407 to 421 (NSSNSGKDLNGDVSL) has biased composition (polar residues).

This sequence belongs to the aromatic acid exporter (TC 2.A.85) family. As to expression, expressed in roots, stems, leaves, flowers and pollen. Mainly detected in the roots vascular stele and in the leaves guard cells.

Its subcellular location is the cell membrane. Functionally, malate-sensitive anion transporter permeable to chloride, nitrate, sulfate and malate. Involved in dark-, CO(2)-, abscisic acid- and water-deficient-induced stomatal closure. Belongs to the R-type anion channels. The chain is Aluminum-activated malate transporter 12 (ALMT12) from Arabidopsis thaliana (Mouse-ear cress).